The following is a 123-amino-acid chain: UPF0426 protein At1g28150, chloroplastic (123 aa).

Residues 1 to 26 (MGFVLICTCPPSSGVVVSQLHHHQFS) constitute a chloroplast transit peptide. Residues 97-123 (SGITEEEVDADGVVSNDEDSPQQIEIE) form a disordered region. Residues 100 to 123 (TEEEVDADGVVSNDEDSPQQIEIE) are compositionally biased toward acidic residues.

This sequence belongs to the UPF0426 family.

It localises to the plastid. The protein resides in the chloroplast. The protein localises to the plastoglobule. The protein is UPF0426 protein At1g28150, chloroplastic of Arabidopsis thaliana (Mouse-ear cress).